We begin with the raw amino-acid sequence, 623 residues long: Leucine aminopeptidase 2 (623 aa).

The disordered stretch occupies residues 1 to 23; that stretch reads MRRCTKNSRSTNPPRDPNTLSNY. Positions 7–23 are enriched in polar residues; sequence NSRSTNPPRDPNTLSNY. Residues 145–147 and 277–282 contribute to the a peptide site; these read QCQ and PYGGME. Residue His-306 coordinates Zn(2+). The active-site Proton acceptor is the Glu-307. 2 residues coordinate Zn(2+): His-310 and Glu-329. Residue Tyr-394 is the Proton donor of the active site.

This sequence belongs to the peptidase M1 family. Zn(2+) serves as cofactor.

It is found in the cytoplasm. Its subcellular location is the nucleus. It catalyses the reaction an epoxide + H2O = an ethanediol. Aminopeptidase that preferentially cleaves di- and tripeptides. Also has low epoxide hydrolase activity (in vitro). Can hydrolyze the epoxide leukotriene LTA(4) but it forms preferentially 5,6-dihydroxy-7,9,11,14-eicosatetraenoic acid rather than the cytokine leukotriene B(4) as the product compared to the homologous mammalian enzyme (in vitro). This is Leucine aminopeptidase 2 from Ajellomyces capsulatus (strain NAm1 / WU24) (Darling's disease fungus).